Here is a 310-residue protein sequence, read N- to C-terminus: Serine/threonine-protein phosphatase 4 catalytic subunit (310 aa).

The Mn(2+) site is built by aspartate 53, histidine 55, aspartate 81, and asparagine 113. Histidine 114 serves as the catalytic Proton donor. Histidine 163 and histidine 237 together coordinate Mn(2+). The residue at position 310 (leucine 310) is a Leucine methyl ester.

Belongs to the PPP phosphatase family. PP-4 (PP-X) subfamily. In terms of assembly, catalytic subunit of the histone H2A phosphatase complex (HTP-C) containing PPH3, PSY2 and PSY4. Requires Mn(2+) as cofactor.

It is found in the cytoplasm. The protein resides in the nucleus. The enzyme catalyses O-phospho-L-seryl-[protein] + H2O = L-seryl-[protein] + phosphate. The catalysed reaction is O-phospho-L-threonyl-[protein] + H2O = L-threonyl-[protein] + phosphate. Involved in the dephosphorylation and activation of the transcription factor GLN3 in response to nutrient availability. Forms the histone H2A phosphatase complex in association with the regulatory subunits PSY2 and PSY4, which dephosphorylates H2AS128ph (gamma-H2A) that has been displaced from sites of DNA lesions in the double-stranded DNA break repair process. Dephosphorylation is necessary for efficient recovery from the DNA damage checkpoint. The chain is Serine/threonine-protein phosphatase 4 catalytic subunit (PPH3) from Eremothecium gossypii (strain ATCC 10895 / CBS 109.51 / FGSC 9923 / NRRL Y-1056) (Yeast).